Consider the following 198-residue polypeptide: Lipoprotein signal peptidase (198 aa).

The interval Met-1 to Pro-34 is disordered. A compositionally biased stretch (acidic residues) spans Ala-12 to Pro-26. Transmembrane regions (helical) follow at residues Leu-42–Val-62, Met-92–Val-112, and Ser-120–Asp-140. Active-site residues include Asp-155 and Asp-169. Residues Val-167–Leu-187 traverse the membrane as a helical segment.

This sequence belongs to the peptidase A8 family.

It is found in the cell membrane. The enzyme catalyses Release of signal peptides from bacterial membrane prolipoproteins. Hydrolyzes -Xaa-Yaa-Zaa-|-(S,diacylglyceryl)Cys-, in which Xaa is hydrophobic (preferably Leu), and Yaa (Ala or Ser) and Zaa (Gly or Ala) have small, neutral side chains.. It participates in protein modification; lipoprotein biosynthesis (signal peptide cleavage). Functionally, this protein specifically catalyzes the removal of signal peptides from prolipoproteins. In Rhodococcus jostii (strain RHA1), this protein is Lipoprotein signal peptidase.